A 323-amino-acid polypeptide reads, in one-letter code: Calcium homeostasis modulator protein 2 (323 aa).

Topologically, residues methionine 1–valine 21 are cytoplasmic. The tract at residues leucine 14–phenylalanine 39 is central pore. A helical membrane pass occupies residues methionine 22 to alanine 43. The Extracellular segment spans residues phenylalanine 44–arginine 52. 2 cysteine pairs are disulfide-bonded: cysteine 46/cysteine 130 and cysteine 48/cysteine 162. The chain crosses the membrane as a helical span at residues asparagine 53–asparagine 76. Residues asparagine 77–leucine 101 are Cytoplasmic-facing. Residues leucine 102 to leucine 132 traverse the membrane as a helical segment. Residues serine 133 to arginine 179 lie on the Extracellular side of the membrane. Residues glutamate 145–histidine 152 form a hemichannel docking region. A helical transmembrane segment spans residues leucine 180–lysine 206. The Cytoplasmic portion of the chain corresponds to histidine 207–serine 323. An intersubunit interaction region spans residues tyrosine 214 to phenylalanine 251.

The protein belongs to the CALHM family. In terms of assembly, homo-undecamer. Two undecameric hemichannels can assemble in a head-to-head manner to form a gap junction. In terms of tissue distribution, placenta.

The protein localises to the cell membrane. It catalyses the reaction ATP(in) = ATP(out). Inhibited by Ca(2+) and ruthenium red in a voltage-dependent way. Its function is as follows. Pore-forming subunit of Ca(2+) homeostasis modulator channels. Mediates ATP release from astrocytes and ATP-induced Ca(2+) influx in microglia thus regulating neuronal ATP and Ca(2+) homeostasis, synaptic transmission and neuroinflammatory response. May form intercellular gap junctions. The gating mechanism remains unknown. The polypeptide is Calcium homeostasis modulator protein 2 (Homo sapiens (Human)).